The sequence spans 110 residues: MEAIAKHQFARVSAQKGRLVADQIRGLPVEKALDILAYSPKAAAGLIKKVLESAIANAEHNEGADIDELKVSRVFLDEGPTMKRIKPRAKGRADRIFKRTSHITVVVSDS.

This sequence belongs to the universal ribosomal protein uL22 family. In terms of assembly, part of the 50S ribosomal subunit.

This protein binds specifically to 23S rRNA; its binding is stimulated by other ribosomal proteins, e.g. L4, L17, and L20. It is important during the early stages of 50S assembly. It makes multiple contacts with different domains of the 23S rRNA in the assembled 50S subunit and ribosome. In terms of biological role, the globular domain of the protein is located near the polypeptide exit tunnel on the outside of the subunit, while an extended beta-hairpin is found that lines the wall of the exit tunnel in the center of the 70S ribosome. This chain is Large ribosomal subunit protein uL22, found in Idiomarina loihiensis (strain ATCC BAA-735 / DSM 15497 / L2-TR).